Consider the following 317-residue polypeptide: MGIQETDPLTQLSLPPGFRFYPTDEELMVQYLCRKAAGYDFSLQLIAEIDLYKFDPWVLPNKALFGEKEWYFFSPRDRKYPNGSRPNRVAGSGYWKATGTDKIISTEGQRVGIKKALVFYIGKAPKGTKTNWIMHEYRLIEPSRRNGSTKLDDWVLCRIYKKQSSAQKQVYDNGIANAREFSNNGTSSTTSSSSHFEDVLDSFHQEIDNRNFQFSNPNRISSLRPDLTEQKTGFHGLADTSNFDWASFAGNVEHNNSVPELGMSHVVPNLEYNCGYLKTEEEVESSHGFNNSGELAQKGYGVDSFGYSGQVGGFGFM.

One can recognise an NAC domain in the interval 14–162; that stretch reads LPPGFRFYPT…DWVLCRIYKK (149 aa).

In terms of assembly, dimer. Interacts with RHA2A, RHA2B or RHG1A, but not with RHA3A or RHA3B. As to expression, expressed in stems, flowers, cauline leaves and rosettes.

The protein localises to the nucleus. Its function is as follows. Transcription factors that bind specifically to the 5'-CATGTG-3' motif. The chain is NAC domain-containing protein 19 (NAC019) from Arabidopsis thaliana (Mouse-ear cress).